The sequence spans 213 residues: Protein-L-isoaspartate O-methyltransferase 1 (213 aa).

Ser-64 is an active-site residue.

This sequence belongs to the methyltransferase superfamily. L-isoaspartyl/D-aspartyl protein methyltransferase family.

It is found in the cytoplasm. It carries out the reaction [protein]-L-isoaspartate + S-adenosyl-L-methionine = [protein]-L-isoaspartate alpha-methyl ester + S-adenosyl-L-homocysteine. Its function is as follows. Catalyzes the methyl esterification of L-isoaspartyl residues in peptides and proteins that result from spontaneous decomposition of normal L-aspartyl and L-asparaginyl residues. It plays a role in the repair and/or degradation of damaged proteins. This Nitrosococcus oceani (strain ATCC 19707 / BCRC 17464 / JCM 30415 / NCIMB 11848 / C-107) protein is Protein-L-isoaspartate O-methyltransferase 1.